Here is a 164-residue protein sequence, read N- to C-terminus: Interferon gamma (164 aa).

Positions 1-19 (MTCQTYNLFVLSVIMIYYG) are cleaved as a signal peptide. 2 N-linked (GlcNAc...) asparagine glycosylation sites follow: N42 and N61.

This sequence belongs to the type II (or gamma) interferon family. In terms of assembly, homodimer.

The protein localises to the secreted. Its function is as follows. Produced by lymphocytes activated by specific antigens or mitogens. IFN-gamma, in addition to having antiviral activity, has important immunoregulatory functions. It is a potent activator of macrophages, it has antiproliferative effects on transformed cells and it can potentiate the antiviral and antitumor effects of the type I interferons. The protein is Interferon gamma (IFNG) of Phasianus colchicus colchicus (Black-necked pheasant).